The chain runs to 314 residues: 4-diphosphocytidyl-2-C-methyl-D-erythritol kinase (314 aa).

Residue K11 is part of the active site. 99–109 provides a ligand contact to ATP; it reads PMAAGLAGGST. Residue D141 is part of the active site.

It belongs to the GHMP kinase family. IspE subfamily.

The enzyme catalyses 4-CDP-2-C-methyl-D-erythritol + ATP = 4-CDP-2-C-methyl-D-erythritol 2-phosphate + ADP + H(+). It participates in isoprenoid biosynthesis; isopentenyl diphosphate biosynthesis via DXP pathway; isopentenyl diphosphate from 1-deoxy-D-xylulose 5-phosphate: step 3/6. Its function is as follows. Catalyzes the phosphorylation of the position 2 hydroxy group of 4-diphosphocytidyl-2C-methyl-D-erythritol. This is 4-diphosphocytidyl-2-C-methyl-D-erythritol kinase from Trichodesmium erythraeum (strain IMS101).